Here is a 79-residue protein sequence, read N- to C-terminus: uncharacterized protein (79 aa).

This is an uncharacterized protein from Ovis aries (Sheep).